We begin with the raw amino-acid sequence, 392 residues long: NADH-quinone oxidoreductase subunit D 1 (392 aa).

This sequence belongs to the complex I 49 kDa subunit family. NDH-1 is composed of 14 different subunits. Subunits NuoB, C, D, E, F, and G constitute the peripheral sector of the complex.

The protein resides in the cell inner membrane. The enzyme catalyses a quinone + NADH + 5 H(+)(in) = a quinol + NAD(+) + 4 H(+)(out). Functionally, NDH-1 shuttles electrons from NADH, via FMN and iron-sulfur (Fe-S) centers, to quinones in the respiratory chain. The immediate electron acceptor for the enzyme in this species is believed to be a menaquinone. Couples the redox reaction to proton translocation (for every two electrons transferred, four hydrogen ions are translocated across the cytoplasmic membrane), and thus conserves the redox energy in a proton gradient. The sequence is that of NADH-quinone oxidoreductase subunit D 1 from Cytophaga hutchinsonii (strain ATCC 33406 / DSM 1761 / CIP 103989 / NBRC 15051 / NCIMB 9469 / D465).